We begin with the raw amino-acid sequence, 75 residues long: DNA-directed RNA polymerase subunit Rpo5 (75 aa).

The protein belongs to the archaeal Rpo5/eukaryotic RPB5 RNA polymerase subunit family. In terms of assembly, part of the RNA polymerase complex.

It localises to the cytoplasm. The catalysed reaction is RNA(n) + a ribonucleoside 5'-triphosphate = RNA(n+1) + diphosphate. DNA-dependent RNA polymerase (RNAP) catalyzes the transcription of DNA into RNA using the four ribonucleoside triphosphates as substrates. This is DNA-directed RNA polymerase subunit Rpo5 from Halobacterium salinarum (strain ATCC 700922 / JCM 11081 / NRC-1) (Halobacterium halobium).